We begin with the raw amino-acid sequence, 250 residues long: Entry-fusion complex associated protein OPG095 (250 aa).

Gly-2 carries the N-myristoyl glycine; by host lipid modification. Positions Gly-2–Asn-12 are targeting to MV membrane. The Virion surface segment spans residues Gly-2–Gly-183. Intrachain disulfides connect Cys-34–Cys-57, Cys-49–Cys-136, and Cys-116–Cys-158. The chain crosses the membrane as a helical span at residues Val-184–Ala-204. Over Lys-205–Asn-250 the chain is Intravirion.

The protein belongs to the orthopoxvirus OPG095 family. In terms of assembly, component of the entry fusion complex (EFC) composed of OPG053, OPG076, OPG086, OPG094, OPG095, OPG099, OPG107, OPG143, OPG104, OPG147 and OPG155. Except for OPG095 and OPG053, each of the EFC proteins is required for assembly or stability of the complex. Myristoylated. In terms of processing, disulfid bonds are oxidized in the cytoplasm by OPG088 protein. Post-translationally, unglycosylated because produced in viral factories instead of the classic ER -Golgi route.

It is found in the virion membrane. In terms of biological role, component of the entry fusion complex (EFC), which consists of 11 proteins. During cell infection, this complex mediates entry of the virion core into the host cytoplasm by a two-step mechanism consisting of lipid mixing of the viral and cellular membranes and subsequent pore formation. The chain is Entry-fusion complex associated protein OPG095 (OPG099) from Homo sapiens (Human).